The sequence spans 685 residues: Probable transcriptional regulator SLK3 (685 aa).

Disordered stretches follow at residues 25 to 66 and 108 to 129; these read NLPG…ENSY and LQQQ…SQRL. Residues 39–56 show a composition bias toward low complexity; that stretch reads QHLPQQQQRQLLEQQAGQ. A dimerization region spans residues 176–423; it reads PAENCITYWR…EHKVGPLEGL (248 aa). The short motif at 185–199 is the Nuclear localization signal element; the sequence is RKFVAEYFSPRAKQR. Residues 447 to 459 are compositionally biased toward polar residues; sequence GNSGAMSGPAQAQ. 3 disordered regions span residues 447–491, 512–591, and 611–658; these read GNSG…MNGS, NNQN…NTQE, and QQQA…NNLP. The span at 460 to 471 shows a compositional bias: low complexity; sequence MTLSSGTMSGST. The span at 512–524 shows a compositional bias: polar residues; sequence NNQNSNTGNQEGF. Over residues 525–543 the composition is skewed to low complexity; sequence SSQNPTLNSNQSPSSSSQQ. Composition is skewed to polar residues over residues 544–588, 611–636, and 645–658; these read RENL…SHGN, QQQA…TSNI, and RINS…NNLP.

It belongs to the adn1/SEU family.

The protein resides in the nucleus. Functionally, probable transcription regulator that functions in the development of the carpel margin meristem similarly to SEUSS (SEU). In association with SEU, supports organ development from meristematic regions by facilitating auxin response and thus organ initiation, and by sustaining meristematic potential through the maintenance of PHABULOSA expression. This Arabidopsis thaliana (Mouse-ear cress) protein is Probable transcriptional regulator SLK3 (SLK3).